We begin with the raw amino-acid sequence, 311 residues long: Glutaminase (311 aa).

7 residues coordinate substrate: S66, N116, E162, N169, Y193, Y245, and V263.

Belongs to the glutaminase family. As to quaternary structure, homotetramer.

The catalysed reaction is L-glutamine + H2O = L-glutamate + NH4(+). The protein is Glutaminase of Rhodopseudomonas palustris (strain TIE-1).